We begin with the raw amino-acid sequence, 369 residues long: Ubiquinone biosynthesis protein COQ4, mitochondrial (369 aa).

A mitochondrion-targeting transit peptide spans 1 to 35 (MLTSQKVSRVLLHSSFLKTPVSTQSRSFVFTTIAT). His212, Asp213, His216, and Glu228 together coordinate Zn(2+). The span at 329–360 (AAAAATVTQRQRQQQRATATAANATSASSANV) shows a compositional bias: low complexity. The segment at 329 to 369 (AAAAATVTQRQRQQQRATATAANATSASSANVKPSNTAGAM) is disordered.

Belongs to the COQ4 family. Component of a multi-subunit COQ enzyme complex, composed of at least COQ3, COQ4, COQ5, COQ6, COQ7 and COQ9. Zn(2+) is required as a cofactor.

Its subcellular location is the mitochondrion inner membrane. It catalyses the reaction a 4-hydroxy-3-methoxy-5-(all-trans-polyprenyl)benzoate + H(+) = a 2-methoxy-6-(all-trans-polyprenyl)phenol + CO2. The protein operates within cofactor biosynthesis; ubiquinone biosynthesis. Lyase that catalyzes the C1-decarboxylation of 4-hydroxy-3-methoxy-5-(all-trans-polyprenyl)benzoic acid into 2-methoxy-6-(all-trans-polyprenyl)phenol during ubiquinone biosynthesis. This Lodderomyces elongisporus (strain ATCC 11503 / CBS 2605 / JCM 1781 / NBRC 1676 / NRRL YB-4239) (Yeast) protein is Ubiquinone biosynthesis protein COQ4, mitochondrial.